The following is a 446-amino-acid chain: 5-hydroxytryptamine receptor (446 aa).

The Extracellular portion of the chain corresponds to Met-1 to Ala-65. N-linked (GlcNAc...) asparagine glycosylation is found at Asn-23, Asn-27, Asn-36, and Asn-42. The helical transmembrane segment at Val-66–Leu-88 threads the bilayer. Topologically, residues Glu-89–Asn-98 are cytoplasmic. The chain crosses the membrane as a helical span at residues Leu-99 to Val-120. The Extracellular portion of the chain corresponds to Tyr-121–Asp-135. A disulfide bond links Cys-134 and Cys-214. The helical transmembrane segment at Met-136–Leu-157 threads the bilayer. The Cytoplasmic segment spans residues Asp-158–Arg-176. Residues Val-177–Trp-199 traverse the membrane as a helical segment. Residues Lys-200–Thr-227 lie on the Extracellular side of the membrane. The helical transmembrane segment at Ala-228–Ala-249 threads the bilayer. Residues Arg-250–Thr-367 lie on the Cytoplasmic side of the membrane. Polar residues predominate over residues Thr-304 to Ala-324. Residues Thr-304 to Ala-329 are disordered. Residues Leu-368–Thr-391 form a helical membrane-spanning segment. Over Cys-392–Val-399 the chain is Extracellular. Residues Leu-400 to Phe-422 traverse the membrane as a helical segment. Residues Ser-423 to Gln-446 are Cytoplasmic-facing.

This sequence belongs to the G-protein coupled receptor 1 family.

It is found in the cell membrane. This is a receptor for 5-hydroxytryptamine (serotonin), a biogenic hormone that function as a neurotransmitter, a hormone, and a mitogen. This chain is 5-hydroxytryptamine receptor, found in Bombyx mori (Silk moth).